The sequence spans 367 residues: Phosphoribosylformylglycinamidine cyclo-ligase (367 aa).

The protein belongs to the AIR synthase family.

The protein localises to the cytoplasm. The catalysed reaction is 2-formamido-N(1)-(5-O-phospho-beta-D-ribosyl)acetamidine + ATP = 5-amino-1-(5-phospho-beta-D-ribosyl)imidazole + ADP + phosphate + H(+). It functions in the pathway purine metabolism; IMP biosynthesis via de novo pathway; 5-amino-1-(5-phospho-D-ribosyl)imidazole from N(2)-formyl-N(1)-(5-phospho-D-ribosyl)glycinamide: step 2/2. The protein is Phosphoribosylformylglycinamidine cyclo-ligase of Cyanothece sp. (strain PCC 7425 / ATCC 29141).